Consider the following 520-residue polypeptide: MTEISMLNDVQKIIVLDYGSQYNQLIARRIREFGVFSELKSHNITAQELRDINPIGIVLSGGPNSVYADDAFGIDPEIFELGIPILGICYGMQLITHTLGGKVVPAGQAGHREYGQSSLRLRSASALFAGTPDEQLVLMSHGDAVTEIPEGFHLVGDSNDCPYAAMENTKKRLYGIQFHPEVRHSVYGNDILKNFAISICGARGDWSMDNFIDMEIAKIRKTVGDRKVLLGLSGGVDSSVVGVLLQKAIGDQLTCIFVDHGLLRKNEGDQVMEMLGGRFGLNIIRVDASKRFLDLLAGVEDPEKKRKIIGNEFVYVFDDEASKLEGVDFLAQGTLYTDIIESGTETAQTIKSHHNVGGLPEDMQFELIEPLNTLFKDEVRALGTALGMPDEVVWRQPFPGPGLAIRIMGEITAEKLETVRESDAILREEIAKAGLDRDVWQYFTVNTGVRSVGVMGDGRTYDYTIAIRAITSIDGMTADFAQLPWEVLKKISVRIVNEVDHVNRIVYDITSKPPATVEWE.

Residues 12 to 205 (KIIVLDYGSQ…AISICGARGD (194 aa)) form the Glutamine amidotransferase type-1 domain. Cys89 functions as the Nucleophile in the catalytic mechanism. Residues His179 and Glu181 contribute to the active site. A GMPS ATP-PPase domain is found at 206–395 (WSMDNFIDME…LGMPDEVVWR (190 aa)). An ATP-binding site is contributed by 233 to 239 (SGGVDSS).

As to quaternary structure, homodimer.

The catalysed reaction is XMP + L-glutamine + ATP + H2O = GMP + L-glutamate + AMP + diphosphate + 2 H(+). The protein operates within purine metabolism; GMP biosynthesis; GMP from XMP (L-Gln route): step 1/1. Functionally, catalyzes the synthesis of GMP from XMP. The sequence is that of GMP synthase [glutamine-hydrolyzing] from Streptococcus equi subsp. zooepidemicus (strain H70).